The following is a 212-amino-acid chain: Molybdenum cofactor guanylyltransferase (212 aa).

GTP contacts are provided by residues 14-16 (LAG), Lys27, Asn55, Asp73, and Asp108. Mg(2+) is bound at residue Asp108.

This sequence belongs to the MobA family. In terms of assembly, monomer. It depends on Mg(2+) as a cofactor.

Its subcellular location is the cytoplasm. It catalyses the reaction Mo-molybdopterin + GTP + H(+) = Mo-molybdopterin guanine dinucleotide + diphosphate. Transfers a GMP moiety from GTP to Mo-molybdopterin (Mo-MPT) cofactor (Moco or molybdenum cofactor) to form Mo-molybdopterin guanine dinucleotide (Mo-MGD) cofactor. The chain is Molybdenum cofactor guanylyltransferase from Bradyrhizobium sp. (strain ORS 278).